Reading from the N-terminus, the 179-residue chain is Large ribosomal subunit protein uL5 (179 aa).

It belongs to the universal ribosomal protein uL5 family. In terms of assembly, part of the 50S ribosomal subunit; part of the 5S rRNA/L5/L18/L25 subcomplex. Contacts the 5S rRNA and the P site tRNA. Forms a bridge to the 30S subunit in the 70S ribosome.

This is one of the proteins that bind and probably mediate the attachment of the 5S RNA into the large ribosomal subunit, where it forms part of the central protuberance. In the 70S ribosome it contacts protein S13 of the 30S subunit (bridge B1b), connecting the 2 subunits; this bridge is implicated in subunit movement. Contacts the P site tRNA; the 5S rRNA and some of its associated proteins might help stabilize positioning of ribosome-bound tRNAs. The polypeptide is Large ribosomal subunit protein uL5 (Ruthia magnifica subsp. Calyptogena magnifica).